The sequence spans 784 residues: Protein DBF4 homolog B (784 aa).

The 91-residue stretch at 27–117 (CREITFAGKS…SRGKQLLKKV (91 aa)) folds into the BRCT domain. A disordered region spans residues 222–243 (TVKKKDPGDQEEEEGQRSQKPQ). The segment at 244–293 (ARKRKGYCECCEETFDTLSEHLVGEHHFRFVSNPLSYKMIDDLAAQLTCD) adopts a DBF4-type zinc-finger fold. 4 residues coordinate Zn(2+): C251, C254, H264, and H270. Disordered stretches follow at residues 299–332 (FGSP…GNEG), 348–368 (HADC…AEEP), and 495–529 (TVGS…AQPA). Residues 498-507 (SQGDVTSHSA) show a composition bias toward polar residues.

Forms a complex with cdc7. Phosphorylated. Stably phosphorylated throughout the cell cycle.

The protein resides in the nucleus. In terms of biological role, regulatory subunit for cdc7 which activates its kinase activity thereby playing a central role in DNA replication and cell proliferation. Specifically required during the initiation of DNA replication in egg and during early embryonic development. The complex cdc7-dbf4b phosphorylates mcm2 and mcm4 subunits and is required for cdc45 loading. The polypeptide is Protein DBF4 homolog B (dbf4b) (Xenopus laevis (African clawed frog)).